The following is a 231-amino-acid chain: Ion-translocating oxidoreductase complex subunit E (231 aa).

6 consecutive transmembrane segments (helical) span residues 18 to 38, 39 to 59, 63 to 83, 86 to 106, 125 to 145, and 182 to 202; these read ALVQ…ATNA, LGLG…ISTL, TPAE…VSAV, LINA…PLIV, ALSA…MCVL, and PFLL…MLAG.

The protein belongs to the NqrDE/RnfAE family. The complex is composed of six subunits: RsxA, RsxB, RsxC, RsxD, RsxE and RsxG.

It is found in the cell inner membrane. Functionally, part of a membrane-bound complex that couples electron transfer with translocation of ions across the membrane. Required to maintain the reduced state of SoxR. In Escherichia coli (strain SMS-3-5 / SECEC), this protein is Ion-translocating oxidoreductase complex subunit E.